The following is a 70-amino-acid chain: MNNRSAVRILRLPAVIQKTGMARATIYDWLNPKSPRYDATFPKKRMLGVKSVGWIEAEIDEWLSQRCKLI.

Residues Leu-12 to Asn-31 constitute a DNA-binding region (H-T-H motif).

In terms of biological role, positive regulator of the expression of the slpA gene. When overexpressed, leads to suppression of the capsule overproduction and UV sensitivity phenotypes of cells mutant for the Lon ATP-dependent protease. Part of the cryptic P4-like prophage CP4-57. Overexpression of AlpA leads to excision of the CP4-57 prophage by IntA. This inactivates ssrA (the gene upstream of the prophage) that encodes tmRNA which is required to rescue stalled ribosomes in a process known as trans-translation. This is DNA-binding transcriptional activator AlpA from Escherichia coli (strain K12).